The following is a 953-amino-acid chain: Calcium-transporting ATPase type 2C member 1 (953 aa).

Over 1-104 the chain is Cytoplasmic; the sequence is MDNLLPQSRF…NEFDISEDEP (104 aa). Residues 105 to 125 traverse the membrane as a helical segment; sequence LWKKYISQFKNPLIMLLLASA. At 126 to 138 the chain is on the lumenal side; it reads VISVLMHQFDDAV. A helical transmembrane segment spans residues 139 to 157; the sequence is SITVAILIVVTVAFVQEYR. Over 158–296 the chain is Cytoplasmic; that stretch reads SEKSLEELSK…APKTPLQKSM (139 aa). The helical transmembrane segment at 297–316 threads the bilayer; that stretch reads DLLGKQLSFYSFGIIGIIML. Over 317–328 the chain is Lumenal; it reads VGWLLGKDILEM. The chain crosses the membrane as a helical span at residues 329 to 346; that stretch reads FTISVSLAVAAIPEGLPI. Positions 337, 338, 340, and 342 each coordinate Ca(2+). The Cytoplasmic portion of the chain corresponds to 347–733; sequence VVTVTLALGV…EEGKGIYNNI (387 aa). The 4-aspartylphosphate intermediate role is filled by D384. Positions 678 and 682 each coordinate Mg(2+). Residues 734-753 traverse the membrane as a helical segment; that stretch reads KNFVRFQLSTSIAALTLISL. Topologically, residues 754–763 are lumenal; sequence ATLMNFPNPL. A helical transmembrane segment spans residues 764-784; sequence NAMQILWINIIMDGPPAQSLG. Ca(2+)-binding residues include N772 and D776. Topologically, residues 785–804 are cytoplasmic; it reads VEPVDKDVIRKPPRNWKDSI. The helical transmembrane segment at 805–824 threads the bilayer; it reads LTKNLILKILVSSIIIVCGT. The Lumenal segment spans residues 825 to 842; sequence LFVFWRELRDNVITPRDT. The chain crosses the membrane as a helical span at residues 843-862; it reads TMTFTCFVFFDMFNALSSRS. The Cytoplasmic segment spans residues 863-875; sequence QTKSVFEIGLCSN. The chain crosses the membrane as a helical span at residues 876-894; it reads KMFCYAVLGSIMGQLLVIY. Residues 895–909 are Lumenal-facing; that stretch reads FPPLQKVFQTESLSI. The chain crosses the membrane as a helical span at residues 910–930; sequence LDLLFLLGLTSSVCIVAEIIK. Over 931 to 953 the chain is Cytoplasmic; sequence KVERSREKIQKPVSSTSSSFLEV.

It belongs to the cation transport ATPase (P-type) (TC 3.A.3) family. Type IIA subfamily. Monomer. Homodimer.

It is found in the golgi apparatus. The protein localises to the trans-Golgi network membrane. Its subcellular location is the golgi stack membrane. The catalysed reaction is Ca(2+)(in) + ATP + H2O = Ca(2+)(out) + ADP + phosphate + H(+). It catalyses the reaction Mn(2+)(in) + ATP + H2O = Mn(2+)(out) + ADP + phosphate + H(+). Its function is as follows. ATP-driven pump that supplies the Golgi apparatus with Ca(2+) and Mn(2+) ions, both essential cofactors for processing and trafficking of newly synthesized proteins in the secretory pathway. Within a catalytic cycle, acquires Ca(2+) or Mn(2+) ions on the cytoplasmic side of the membrane and delivers them to the lumenal side. The transfer of ions across the membrane is coupled to ATP hydrolysis and is associated with a transient phosphorylation that shifts the pump conformation from inward-facing to outward-facing state. Plays a primary role in the maintenance of Ca(2+) homeostasis in the trans-Golgi compartment with a functional impact on Golgi and post-Golgi protein sorting as well as a structural impact on cisternae morphology. Responsible for loading the Golgi stores with Ca(2+) ions in keratinocytes, contributing to keratinocyte differentiation and epidermis integrity. Participates in Ca(2+) and Mn(2+) ions uptake into the Golgi store of hippocampal neurons and regulates protein trafficking required for neural polarity. May also play a role in the maintenance of Ca(2+) and Mn(2+) homeostasis and signaling in the cytosol while preventing cytotoxicity. This is Calcium-transporting ATPase type 2C member 1 (ATP2C1) from Bos taurus (Bovine).